We begin with the raw amino-acid sequence, 596 residues long: Chaperonin 60 subunit beta 2, chloroplastic (596 aa).

The transit peptide at Met-1–Cys-50 directs the protein to the chloroplast. Phosphoserine is present on residues Ser-97 and Ser-474. Positions Thr-388–Lys-489 form a coiled coil.

The protein belongs to the chaperonin (HSP60) family. Part of the Cpn60 complex composed of 7 alpha and 7 beta subunits. Can also form a complex composed of 14 beta subunits only. Both complexes show ATPase activity. The Cpn60 complex interacts with the Cpn10 complex. Interacts with RAB during heat stress.

It is found in the plastid. It localises to the chloroplast stroma. Involved in protein assisted folding. The protein is Chaperonin 60 subunit beta 2, chloroplastic (CPN60B2) of Arabidopsis thaliana (Mouse-ear cress).